Here is a 337-residue protein sequence, read N- to C-terminus: Mitochondrial glutathione transporter SLC25A40 (337 aa).

Solcar repeat units lie at residues 14-132, 140-224, and 234-328; these read VTPL…LSTF, NETR…LRRW, and STFM…GKGF. 6 helical membrane passes run 20-40, 104-124, 146-166, 200-221, 240-260, and 299-319; these read MMAS…LDVV, LWSG…IYFT, IVAG…LELI, WAPT…YENL, FTAG…FDVV, and GLFT…AIMI.

This sequence belongs to the mitochondrial carrier (TC 2.A.29) family. As to expression, widely expressed at low level.

The protein resides in the mitochondrion inner membrane. It carries out the reaction glutathione(in) = glutathione(out). Its function is as follows. Probable mitochondrial transporter required for glutathione import into mitochondria. Glutathione, which plays key roles in oxidative metabolism, is produced exclusively in the cytosol and is imported in many organelles. Mitochondrial glutathione is required for the activity and stability of proteins containing iron-sulfur clusters, as well as erythropoiesis. The polypeptide is Mitochondrial glutathione transporter SLC25A40 (Rattus norvegicus (Rat)).